Here is a 152-residue protein sequence, read N- to C-terminus: Deoxyuridine 5'-triphosphate nucleotidohydrolase (152 aa).

Substrate is bound by residues 62 to 64, Asn-75, and 79 to 81; these read RSG and TVD.

It belongs to the dUTPase family. Mg(2+) is required as a cofactor.

It carries out the reaction dUTP + H2O = dUMP + diphosphate + H(+). It functions in the pathway pyrimidine metabolism; dUMP biosynthesis; dUMP from dCTP (dUTP route): step 2/2. Its function is as follows. This enzyme is involved in nucleotide metabolism: it produces dUMP, the immediate precursor of thymidine nucleotides and it decreases the intracellular concentration of dUTP so that uracil cannot be incorporated into DNA. In Leifsonia xyli subsp. xyli (strain CTCB07), this protein is Deoxyuridine 5'-triphosphate nucleotidohydrolase.